The chain runs to 211 residues: Redox-sensing transcriptional repressor Rex (211 aa).

The H-T-H motif DNA-binding region spans 17–56 (LYYRFVSSLKSKGIDRVNSKAISDALQIDSATIRRDFSYF). 91 to 96 (GVGNLG) contacts NAD(+).

It belongs to the transcriptional regulatory Rex family. In terms of assembly, homodimer.

The protein localises to the cytoplasm. Its function is as follows. Modulates transcription in response to changes in cellular NADH/NAD(+) redox state. This is Redox-sensing transcriptional repressor Rex from Staphylococcus aureus (strain Mu3 / ATCC 700698).